Here is a 554-residue protein sequence, read N- to C-terminus: GPI transamidase component PIG-S homolog (554 aa).

Residues 1-73 (MSPCKWLTMF…LNKPEKSLKR (73 aa)) are Cytoplasmic-facing. The chain crosses the membrane as a helical span at residues 74–94 (YALLSFYVIILLAIPVWWKTT). At 95 to 511 (HYERSSLPFE…VTTIYFPDES (417 aa)) the chain is on the lumenal side. N-linked (GlcNAc...) asparagine glycans are attached at residues N132 and N375. Residues 512 to 532 (KYGIYAPLFAPILIPLLISFI) traverse the membrane as a helical segment. At 533–554 (KEVKDMLRERKLHRVANVPKPN) the chain is on the cytoplasmic side.

It belongs to the PIGS family. In terms of assembly, forms a complex with PIG-T homolog, PIG-U homolog and GPI8.

Its subcellular location is the endoplasmic reticulum membrane. The protein operates within glycolipid biosynthesis; glycosylphosphatidylinositol-anchor biosynthesis. Functionally, component of the GPI transamidase complex. Involved in transfer of GPI to proteins. The chain is GPI transamidase component PIG-S homolog (gpi17) from Schizosaccharomyces pombe (strain 972 / ATCC 24843) (Fission yeast).